A 1823-amino-acid polypeptide reads, in one-letter code: WD repeat-containing protein DDB_G0292056 (1823 aa).

Residues 1–68 form a disordered region; sequence MTYNNNNNYL…IGNSSGGGGV (68 aa). Residues 16 to 61 are compositionally biased toward low complexity; the sequence is TSTSTSTSTSTPTSTKTSPLNTSSSSNILKSNSRNPSPNNPTNIGN. WD repeat units follow at residues 138–177, 182–222, 228–267, 270–310, 312–354, and 360–405; these read QSKW…YPLL, SHQR…KAVK, SHIL…QELN, VHSA…PKST, ITSN…YSTP, and GHTD…KDLF. Disordered regions lie at residues 418–461, 530–562, 649–687, 714–778, 805–840, 883–940, 966–996, 1014–1058, and 1122–1186; these read PTTT…LLST, QPDD…NNNN, NITE…GFLK, IDIS…YRPG, ILTN…TNDQ, IPNN…SSTS, SSSS…NPPR, NNIT…NDNP, and QQLV…NGKS. Low complexity-rich tracts occupy residues 419-432 and 440-461; these read TTTT…TTTT and LNES…LLST. 2 stretches are compositionally biased toward low complexity: residues 654–680 and 717–748; these read NNNN…NNNN and SQQQ…QQQQ. 2 stretches are compositionally biased toward polar residues: residues 749–768 and 827–840; these read FLTA…SPTS and MNAS…TNDQ. Composition is skewed to low complexity over residues 885–926, 966–993, 1014–1041, and 1127–1183; these read NNNK…SSNN, SSSS…KNIN, NNIT…NRLN, and SSSP…NNGN. One copy of the WD 7 repeat lies at 1207–1250; sequence ANSYILSGKPVEEICKYNSELAEKENRKDLVKLWNTLGMITDSK. Disordered stretches follow at residues 1264–1307, 1697–1725, and 1764–1823; these read SHFG…LHQS, QQQP…HTHN, and PQQE…MFSN. A compositionally biased stretch (low complexity) spans 1282 to 1293; it reads STGIASSTGSNS. The span at 1710–1725 shows a compositional bias: polar residues; it reads MSGTSHYHQQQPHTHN.

The protein is WD repeat-containing protein DDB_G0292056 of Dictyostelium discoideum (Social amoeba).